The primary structure comprises 644 residues: Chaperone protein DnaK (644 aa).

Threonine 199 bears the Phosphothreonine; by autocatalysis mark. The disordered stretch occupies residues 602–644 (IYAKKSSEGQTAQGQTQSQESTKPAEEGVVDAEFEEVKEEDKK). A compositionally biased stretch (polar residues) spans 609 to 623 (EGQTAQGQTQSQEST). Positions 629-644 (GVVDAEFEEVKEEDKK) are enriched in acidic residues.

It belongs to the heat shock protein 70 family.

Functionally, acts as a chaperone. The chain is Chaperone protein DnaK from Legionella pneumophila (strain Lens).